The primary structure comprises 385 residues: Protein pelota homolog (385 aa).

A Glycyl lysine isopeptide (Lys-Gly) (interchain with G-Cter in SUMO2) cross-link involves residue Lys-162. Phosphoserine occurs at positions 374, 380, 381, and 382.

The protein belongs to the eukaryotic release factor 1 family. Pelota subfamily. Component of the Pelota-HBS1L complex, also named Dom34-Hbs1 complex, composed of PELO and HBS1L. Interacts with PINK1. Interacts with ABCE1. Interacts with CNOT4. The cofactor is a divalent metal cation.

Its subcellular location is the cytoplasm. In terms of biological role, component of the Pelota-HBS1L complex, a complex that recognizes stalled ribosomes and triggers the No-Go Decay (NGD) pathway. In the Pelota-HBS1L complex, PELO recognizes ribosomes stalled at the 3' end of an mRNA and engages stalled ribosomes by destabilizing mRNA in the mRNA channel. Following mRNA extraction from stalled ribosomes by the SKI complex, the Pelota-HBS1L complex promotes recruitment of ABCE1, which drives the disassembly of stalled ribosomes, followed by degradation of damaged mRNAs as part of the NGD pathway. As part of the PINK1-regulated signaling, upon mitochondrial damage is recruited to the ribosome/mRNA-ribonucleoprotein complex associated to mitochondrial outer membrane thereby enabling the recruitment of autophagy receptors and induction of mitophagy. The sequence is that of Protein pelota homolog (PELO) from Bos taurus (Bovine).